The sequence spans 494 residues: MASRILVNIKEEVTCPICLELLTEPLSLDCGHSFCQACITANHKESTLHQGERSCPLCRISYPSENLRPNRHLANIVERLREVVLSPEEGQKVDLCARHGEKLLLFCQQDGNVICWLCERSQEHRGHHTFLVEEVAQTYRENLQVVLEMMRQKHQDAEKLEADVREEQASWKIQIQNDKTNIMAEFKQLRDILDCEESNELQNLEKEEKNILKRLVQSENDMVLQTQSISVLISDLEHRLQGSVMELLQGVDGVIKRVKNVTLQKPKTFLNEKRRVFRVPDLKGMLQVSKELTEVQRYWAHVTLVASHPSRAVISEDERQVRYQEWIHQSSGRVKYFYGVLGSPSITSGKHYWEVDVSNKSAWILGVCVSLKCAANRNGPGVENYQPKNGYWVIGLRNADNYSAFQDSVKYNDFQDGSRSTTYAPLIVPLFMTICPNRVGVFLDYEACTVSFFNVTSNGFLIYKFSNCHFSYPVFPYFSPMTCELPMTLCSPRS.

An N-acetylalanine modification is found at A2. Residues 15 to 59 (CPICLELLTEPLSLDCGHSFCQACITANHKESTLHQGERSCPLCR) form an RING-type zinc finger. S86 carries the post-translational modification Phosphoserine. Residues 91–132 (QKVDLCARHGEKLLLFCQQDGNVICWLCERSQEHRGHHTFLV) form a B box-type zinc finger. C96, H99, C118, and H124 together coordinate Zn(2+). A coiled-coil region spans residues 140–223 (RENLQVVLEM…RLVQSENDMV (84 aa)). The required for interaction with GABARAP and for autophagy stretch occupies residues 186–199 (FKQLRDILDCEESN). Residues 280 to 494 (PDLKGMLQVS…LPMTLCSPRS (215 aa)) form the B30.2/SPRY domain.

This sequence belongs to the TRIM/RBCC family. In terms of assembly, can form homodimers and homotrimers. In addition to lower-order dimerization, also exhibits a higher-order multimerization and both low- and high-order multimerizations are essential for its restriction activity. Interacts with BTBD1 and BTBD2. Interacts with PSMC4, PSMC5, PSMD7 and HSPA8/HSC70. Interacts (via B30.2/SPRY domain) with HSPA1A/B. Interacts with PSMC2, MAP3K7/TAK1, TAB2 and TAB3. Interacts with SQSTM1. Interacts with TRIM6 and TRIM34. Interacts with ULK1 (phosphorylated form), GABARAP, GABARAPL1, GABARAPL2, MAP1LC3A, MAP1LC3C and BECN1. In terms of processing, degraded in a proteasome-independent fashion in the absence of viral infection but in a proteasome-dependent fashion following exposure to restriction sensitive virus. Autoubiquitinated in a RING finger- and UBE2D2-dependent manner. Monoubiquitinated by TRIM21. Deubiquitinated by Yersinia YopJ. Ubiquitination may not lead to proteasomal degradation.

The protein resides in the cytoplasm. It localises to the nucleus. It carries out the reaction S-ubiquitinyl-[E2 ubiquitin-conjugating enzyme]-L-cysteine + [acceptor protein]-L-lysine = [E2 ubiquitin-conjugating enzyme]-L-cysteine + N(6)-ubiquitinyl-[acceptor protein]-L-lysine.. It functions in the pathway protein modification; protein ubiquitination. Functionally, capsid-specific restriction factor that prevents infection from non-host-adapted retroviruses. Blocks viral replication early in the life cycle, after viral entry but before reverse transcription. In addition to acting as a capsid-specific restriction factor, also acts as a pattern recognition receptor that activates innate immune signaling in response to the retroviral capsid lattice. Binding to the viral capsid triggers its E3 ubiquitin ligase activity, and in concert with the heterodimeric ubiquitin conjugating enzyme complex UBE2V1-UBE2N (also known as UBC13-UEV1A complex) generates 'Lys-63'-linked polyubiquitin chains, which in turn are catalysts in the autophosphorylation of the MAP3K7/TAK1 complex (includes TAK1, TAB2, and TAB3). Activation of the MAP3K7/TAK1 complex by autophosphorylation results in the induction and expression of NF-kappa-B and MAPK-responsive inflammatory genes, thereby leading to an innate immune response in the infected cell. Plays a role in regulating autophagy through activation of autophagy regulator BECN1 by causing its dissociation from its inhibitors BCL2 and TAB2. The protein is Tripartite motif-containing protein 5 (TRIM5) of Plecturocebus donacophilus (Bolivian gray titi monkey).